Here is a 407-residue protein sequence, read N- to C-terminus: MLESLQPESHLLHDEPDPGESVYECNECKETFSLEQNFVEHKKTHSGEKSPECTGCGEESSQASSLTLHLRSRPRRESYKCGECGKAFSQRGNFLSHQKQHTEERPSESKKTPVPMTTTVRNQRNTGNKPYACKECGKAFNGKSYLKEHEKIHTGEKPFECSQCGRAFSQKQYLIKHQNIHSGKKPFKCNECGKAFSQKENLIIHQRIHTGEKPYECKGCGKAFIQKSSLIRHQRSHTGEKPYTCKECGKAFSGKSNLTEHEKIHIGEKPYKCNECGTIFRQKQYLIKHHNIHTGEKPYECNKCGKAFSRITSLIVHVRIHTGDKPYECKICGKAFCQSSSLTVHMRSHTGEKPYGCNECGKAFSQFSTLALHMRIHTGEKPYQCSECGKAFSQKSHHIRHQRIHIH.

Disordered stretches follow at residues 1 to 21 (MLESLQPESHLLHDEPDPGES), 39 to 72 (VEHKKTHSGEKSPECTGCGEESSQASSLTLHLRS), and 96 to 124 (SHQKQHTEERPSESKKTPVPMTTTVRNQR). The segment at 23–45 (YECNECKETFSLEQNFVEHKKTH) adopts a C2H2-type 1 zinc-finger fold. Composition is skewed to basic and acidic residues over residues 39 to 51 (VEHKKTHSGEKSP) and 100 to 111 (QHTEERPSESKK). Residues 51-73 (PECTGCGEESSQASSLTLHLRSR) form a C2H2-type 2; degenerate zinc finger. The C2H2-type 3 zinc-finger motif lies at 79 to 101 (YKCGECGKAFSQRGNFLSHQKQH). The span at 115 to 124 (PMTTTVRNQR) shows a compositional bias: polar residues. C2H2-type zinc fingers lie at residues 131 to 153 (YACKECGKAFNGKSYLKEHEKIH), 159 to 181 (FECSQCGRAFSQKQYLIKHQNIH), 187 to 209 (FKCNECGKAFSQKENLIIHQRIH), 215 to 237 (YECKGCGKAFIQKSSLIRHQRSH), 243 to 265 (YTCKECGKAFSGKSNLTEHEKIH), 271 to 293 (YKCNECGTIFRQKQYLIKHHNIH), 299 to 321 (YECNKCGKAFSRITSLIVHVRIH), 327 to 349 (YECKICGKAFCQSSSLTVHMRSH), 355 to 377 (YGCNECGKAFSQFSTLALHMRIH), and 383 to 405 (YQCSECGKAFSQKSHHIRHQRIH).

This sequence belongs to the krueppel C2H2-type zinc-finger protein family. Binds DNA. Interacts with GATA4. As to expression, predominantly present in heart. Outside the heart, it is detected in embryonic and postnatal vascular smooth muscle cells and in epithelial cells of the lung, gut and kidney at sites of epithelial morphogenesis and in the spinal cord (at protein level).

It is found in the nucleus. Transcription factor that acts as a cardiac regulator and an effector of alpha1-adrenergic signaling. Binds to PE response elements (PERE) present in the promoter of genes such as ANF/NPPA and acts as a direct transcriptional activator of NPPA. Also acts as a cofactor with GATA4, a key cardiac regulator. The chain is Zinc finger protein 260 (Znf260) from Mus musculus (Mouse).